The sequence spans 607 residues: Autophagy-related protein 16-1 (607 aa).

The interaction with ATG5 stretch occupies residues W13–L43. A coiled-coil region spans residues D79 to E230. A Phosphoserine modification is found at S139. The WIPI2-binding stretch occupies residues A207–E230. Residues E230 to V242 are RB1CC1-binding. Phosphoserine occurs at positions 269 and 287. The Caspase cleavage signature appears at D296–D299. WD repeat units follow at residues A320–K359, G364–T403, G406–T445, F447–E484, E486–T525, K532–S573, and Q575–Y607.

It belongs to the WD repeat ATG16 family. As to quaternary structure, homodimer. Homooligomer. Heterooligomer with ATG16L2. Interacts with WIPI1. Interacts with WIPI2. Interacts with RB1CC1; the interaction is required for ULK1 complex-dependent autophagy. Interacts with ATG5. Part of the minor complex composed of 4 sets of ATG12-ATG5 and ATG16L1 (400 kDa); this complex interacts with ATG3 leading to disruption of ATG7 interaction and promotion of ATG8-like proteins lipidation. Part of the major complex composed of 8 sets of ATG12-ATG5 and ATG16L1 (800 kDa). Interacts with RAB33B (GTP- and GDP-bound forms); the complex consists of a tetramer where two RAB33B molecules bind independently one molecule of the ATG16L1 homodimer; the interaction promotes ATG12-ATG5-ATG16L1 complex recruitment to phagophores. Interacts (via WD repeats) with TMEM59; the interaction mediates unconventional autophagic activity of TMEM59. Interacts with TLR2. Interacts (via WD repeats) with MEFV. Interacts with PPP1CA; the interaction dephosphorylates ATG16L1 causing dissociation of ATG12-ATG5-ATG16L1 complex. Interacts (via N-terminal) with CLTC. Interacts with NOD1. Interacts with NOD2. Interacts with TUFM. Interacts with TRIM16. Interacts (via WD repeats) with SPATA33. Interacts with IRGM. Proteolytic cleavage by activated CASP3 leads to degradation and may regulate autophagy upon cellular stress and apoptotic stimuli. In terms of processing, phosphorylation at Ser-139 promotes association with the ATG12-ATG5 conjugate to form the ATG12-ATG5-ATG16L1 complex.

The protein localises to the cytoplasm. The protein resides in the preautophagosomal structure membrane. It is found in the endosome membrane. It localises to the lysosome membrane. Its function is as follows. Plays an essential role in both canonical and non-canonical autophagy: interacts with ATG12-ATG5 to mediate the lipidation to ATG8 family proteins (MAP1LC3A, MAP1LC3B, MAP1LC3C, GABARAPL1, GABARAPL2 and GABARAP). Acts as a molecular hub, coordinating autophagy pathways via distinct domains that support either canonical or non-canonical signaling. During canonical autophagy, interacts with ATG12-ATG5 to mediate the conjugation of phosphatidylethanolamine (PE) to ATG8 proteins, to produce a membrane-bound activated form of ATG8. Thereby, controls the elongation of the nascent autophagosomal membrane. As part of the ATG8 conjugation system with ATG5 and ATG12, required for recruitment of LRRK2 to stressed lysosomes and induction of LRRK2 kinase activity in response to lysosomal stress. Also involved in non-canonical autophagy, a parallel pathway involving conjugation of ATG8 proteins to single membranes at endolysosomal compartments, probably by catalyzing conjugation of phosphatidylserine (PS) to ATG8. Non-canonical autophagy plays a key role in epithelial cells to limit lethal infection by influenza A (IAV) virus. Regulates mitochondrial antiviral signaling (MAVS)-dependent type I interferon (IFN-I) production. Negatively regulates NOD1- and NOD2-driven inflammatory cytokine response. Instead, promotes an autophagy-dependent antibacterial pathway together with NOD1 or NOD2. Plays a role in regulating morphology and function of Paneth cell. This chain is Autophagy-related protein 16-1, found in Pongo abelii (Sumatran orangutan).